The sequence spans 361 residues: Tyrosine--tRNA ligase (361 aa).

L-tyrosine contacts are provided by tyrosine 36, tyrosine 162, glutamine 166, aspartate 169, and glutamine 184. The 'KMSKS' region motif lies at 235–239; sequence KMSKS. An ATP-binding site is contributed by lysine 238.

Belongs to the class-I aminoacyl-tRNA synthetase family. TyrS type 4 subfamily. Homodimer.

It localises to the cytoplasm. The catalysed reaction is tRNA(Tyr) + L-tyrosine + ATP = L-tyrosyl-tRNA(Tyr) + AMP + diphosphate + H(+). Functionally, catalyzes the attachment of tyrosine to tRNA(Tyr) in a two-step reaction: tyrosine is first activated by ATP to form Tyr-AMP and then transferred to the acceptor end of tRNA(Tyr). This chain is Tyrosine--tRNA ligase, found in Sulfolobus acidocaldarius (strain ATCC 33909 / DSM 639 / JCM 8929 / NBRC 15157 / NCIMB 11770).